Reading from the N-terminus, the 123-residue chain is Small ribosomal subunit protein uS12 (123 aa).

The disordered stretch occupies residues 1 to 32 (MPTIQQLVRKGRKDKKAKVKTAALKGSPQRRG). The segment covering 9–19 (RKGRKDKKAKV) has biased composition (basic residues). At D89 the chain carries 3-methylthioaspartic acid.

This sequence belongs to the universal ribosomal protein uS12 family. As to quaternary structure, part of the 30S ribosomal subunit. Contacts proteins S8 and S17. May interact with IF1 in the 30S initiation complex.

In terms of biological role, with S4 and S5 plays an important role in translational accuracy. Its function is as follows. Interacts with and stabilizes bases of the 16S rRNA that are involved in tRNA selection in the A site and with the mRNA backbone. Located at the interface of the 30S and 50S subunits, it traverses the body of the 30S subunit contacting proteins on the other side and probably holding the rRNA structure together. The combined cluster of proteins S8, S12 and S17 appears to hold together the shoulder and platform of the 30S subunit. The protein is Small ribosomal subunit protein uS12 of Corynebacterium kroppenstedtii (strain DSM 44385 / JCM 11950 / CIP 105744 / CCUG 35717).